The chain runs to 476 residues: MEEPFLPQDEQIVPCKATWKSGQLNVELKKVSRLAVPMATVTIAQYLLPVISVMVAGHNGELQLSGVALATSFTNVSGFSIMFGLVGSLETLSGQAYGAKQYEKMGTYTYSAISSNIPICVLISILWIYMEKLLISLGQDPDISRVAGSYALRLIPTLFAHAIVLPLTRFLLAQGLVLPLLYFALTTLLFHIAVCWTLVSALGLGSNGAALAISVSFWFFAMTLSCYVRFSSSCEKTRRFVSQDFLSSVKQFFRYGVPSAAMLCLEWWLFELLILCSGLLQNPKLETSVLSICLTTATLHYVIPVGVAAAVSTRVSNKLGAGIPQVARVSVLAGLCLWLVESSFFSILLFAFRNIIGYAFSNSKEVVDYVADLSPLLCLSFVLDGFTAVLNGVARGCGWQHIGALNNVVAYYLVGAPVGIYLAFSCELNGKGLWCGVVVGSAVQAIILAIVTASMNWKEQAKKARKRLISSENGLA.

The next 12 helical transmembrane spans lie at 35–55 (AVPM…SVMV), 66–86 (GVAL…FGLV), 117–137 (IPIC…LISL), 154–174 (LIPT…LLAQ), 176–196 (LVLP…AVCW), 208–228 (GAAL…SCYV), 260–280 (AAML…SGLL), 289–309 (VLSI…GVAA), 332–352 (LAGL…LFAF), 370–390 (VADL…TAVL), 408–428 (VVAY…SCEL), and 433–453 (LWCG…IVTA).

This sequence belongs to the multi antimicrobial extrusion (MATE) (TC 2.A.66.1) family.

It is found in the membrane. This Arabidopsis thaliana (Mouse-ear cress) protein is Protein DETOXIFICATION 4.